The chain runs to 212 residues: Thaumatin-like protein 1b (212 aa).

Intrachain disulfides connect Cys47–Cys57, Cys62–Cys69, Cys117–Cys200, Cys122–Cys183, Cys130–Cys146, Cys150–Cys159, and Cys160–Cys170.

Belongs to the thaumatin family.

It is found in the secreted. In Malus domestica (Apple), this protein is Thaumatin-like protein 1b.